The chain runs to 327 residues: Embigin (327 aa).

Positions Met-1–Ala-32 are cleaved as a signal peptide. Topologically, residues Asp-33 to Pro-260 are extracellular. 9 N-linked (GlcNAc...) asparagine glycosylation sites follow: Asn-54, Asn-61, Asn-75, Asn-85, Asn-100, Asn-189, Asn-196, Asn-213, and Asn-218. Ig-like V-type domains are found at residues Pro-71–Val-158 and Pro-159–Val-253. 2 cysteine pairs are disulfide-bonded: Cys-88–Cys-142 and Cys-180–Cys-237. Residues Leu-261–Cys-281 form a helical membrane-spanning segment. Residues Glu-282–Gln-327 lie on the Cytoplasmic side of the membrane. The disordered stretch occupies residues Lys-287–Gln-327. Over residues His-291 to Asp-308 the composition is skewed to basic and acidic residues. The residue at position 309 (Ser-309) is a Phosphoserine.

In terms of assembly, interacts with SLC16A1, SLC16A6 and SLC16A7.

It localises to the cell membrane. The protein localises to the synapse. In terms of biological role, plays a role in the outgrowth of motoneurons and in the formation of neuromuscular junctions. Following muscle denervation, promotes nerve terminal sprouting and the formation of additional acetylcholine receptor clusters at synaptic sites without affecting terminal Schwann cell number or morphology. Delays the retraction of terminal sprouts following re-innervation of denervated endplates. May play a role in targeting the monocarboxylate transporters SLC16A1, SLC16A6 and SLC16A7 to the cell membrane. The chain is Embigin (EMB) from Homo sapiens (Human).